We begin with the raw amino-acid sequence, 163 residues long: 2,3-dimethylmalate dehydratase small subunit (163 aa).

It belongs to the LeuD family. LeuD type 2 subfamily. As to quaternary structure, heterodimer of a large and a small subunit.

It catalyses the reaction (2R,3S)-2,3-dimethylmalate = dimethylmaleate + H2O. Its pathway is cofactor degradation; nicotinate degradation; propanoate and pyruvate from 6-hydroxynicotinate: step 7/8. In Eubacterium barkeri (Clostridium barkeri), this protein is 2,3-dimethylmalate dehydratase small subunit.